The primary structure comprises 539 residues: GMP synthase [glutamine-hydrolyzing] (539 aa).

Residues 4–203 (KILILDFGSQ…VHDICGCKSD (200 aa)) form the Glutamine amidotransferase type-1 domain. Cys-82 functions as the Nucleophile in the catalytic mechanism. Catalysis depends on residues His-177 and Glu-179. In terms of domain architecture, GMPS ATP-PPase spans 204–395 (WNMPDYIAEA…LGLPHDMVYR (192 aa)). 231–237 (SGGVDSS) provides a ligand contact to ATP.

In terms of assembly, homodimer.

The catalysed reaction is XMP + L-glutamine + ATP + H2O = GMP + L-glutamate + AMP + diphosphate + 2 H(+). The protein operates within purine metabolism; GMP biosynthesis; GMP from XMP (L-Gln route): step 1/1. Its function is as follows. Catalyzes the synthesis of GMP from XMP. In Herminiimonas arsenicoxydans, this protein is GMP synthase [glutamine-hydrolyzing].